The sequence spans 410 residues: CRAL-TRIO domain-containing protein F28H7.8 (410 aa).

Positions 81–257 (FSDARRKHAP…RYGGMIPDIQ (177 aa)) constitute a CRAL-TRIO domain.

The protein is CRAL-TRIO domain-containing protein F28H7.8 of Caenorhabditis elegans.